We begin with the raw amino-acid sequence, 129 residues long: MAREFKRSDRVAQELQKEVAVILQREVKDPRIGMVTVSDVEVSRDLAYAKIFVTFLFDNDPEAIKQGMKGLEKAAPYIRSLLGKAMRLRIVPELRFVYDQSLVEGMRMSNLVSNVIKNDEAKHVAEDSE.

This sequence belongs to the RbfA family. In terms of assembly, monomer. Binds 30S ribosomal subunits, but not 50S ribosomal subunits or 70S ribosomes.

The protein resides in the cytoplasm. In terms of biological role, one of several proteins that assist in the late maturation steps of the functional core of the 30S ribosomal subunit. Associates with free 30S ribosomal subunits (but not with 30S subunits that are part of 70S ribosomes or polysomes). Required for efficient processing of 16S rRNA. May interact with the 5'-terminal helix region of 16S rRNA. This is Ribosome-binding factor A from Actinobacillus succinogenes (strain ATCC 55618 / DSM 22257 / CCUG 43843 / 130Z).